The sequence spans 118 residues: Small ribosomal subunit protein uS13 (118 aa).

Residues 94–118 are disordered; that stretch reads SLPLRGQRTKTNARTRKGPRKPIKK.

This sequence belongs to the universal ribosomal protein uS13 family. As to quaternary structure, part of the 30S ribosomal subunit. Forms a loose heterodimer with protein S19. Forms two bridges to the 50S subunit in the 70S ribosome.

Located at the top of the head of the 30S subunit, it contacts several helices of the 16S rRNA. In the 70S ribosome it contacts the 23S rRNA (bridge B1a) and protein L5 of the 50S subunit (bridge B1b), connecting the 2 subunits; these bridges are implicated in subunit movement. Contacts the tRNAs in the A and P-sites. This chain is Small ribosomal subunit protein uS13, found in Alteromonas mediterranea (strain DSM 17117 / CIP 110805 / LMG 28347 / Deep ecotype).